The following is a 225-amino-acid chain: NAD(P)H-quinone oxidoreductase subunit K, chloroplastic (225 aa).

Positions 43, 44, 108, and 139 each coordinate [4Fe-4S] cluster.

It belongs to the complex I 20 kDa subunit family. In terms of assembly, NDH is composed of at least 16 different subunits, 5 of which are encoded in the nucleus. The cofactor is [4Fe-4S] cluster.

The protein resides in the plastid. It is found in the chloroplast thylakoid membrane. It carries out the reaction a plastoquinone + NADH + (n+1) H(+)(in) = a plastoquinol + NAD(+) + n H(+)(out). The catalysed reaction is a plastoquinone + NADPH + (n+1) H(+)(in) = a plastoquinol + NADP(+) + n H(+)(out). Functionally, NDH shuttles electrons from NAD(P)H:plastoquinone, via FMN and iron-sulfur (Fe-S) centers, to quinones in the photosynthetic chain and possibly in a chloroplast respiratory chain. The immediate electron acceptor for the enzyme in this species is believed to be plastoquinone. Couples the redox reaction to proton translocation, and thus conserves the redox energy in a proton gradient. The sequence is that of NAD(P)H-quinone oxidoreductase subunit K, chloroplastic from Nandina domestica (Heavenly bamboo).